A 990-amino-acid chain; its full sequence is Presequence protease, mitochondrial (990 aa).

The N-terminal 56 residues, 1 to 56 (MLRFQRTVPRVAIRRLANVYSEGAVLHGYKVRRAQEIPEMRMAAVELEHEMTGARH), are a transit peptide targeting the mitochondrion. Residue histidine 84 coordinates Zn(2+). Residue glutamate 87 is the Proton acceptor of the active site. Residue histidine 88 coordinates Zn(2+). Glutamate 160 is a catalytic residue. Glutamate 185 is a binding site for Zn(2+).

Belongs to the peptidase M16 family. PreP subfamily. In terms of assembly, monomer and homodimer; homodimerization is induced by binding of the substrate. Zn(2+) is required as a cofactor.

The protein resides in the mitochondrion intermembrane space. It is found in the mitochondrion matrix. Degrades mitochondrial transit peptides after their cleavage in the intermembrane space or in the matrix, and presequence peptides; clearance of these peptides is required to keep the presequence processing machinery running. Preferentially cleaves the N-terminal side of paired basic amino acid residues. Also degrades other unstructured peptides. May function as an ATP-dependent peptidase as opposed to a metalloendopeptidase. This chain is Presequence protease, mitochondrial (CYM1), found in Eremothecium gossypii (strain ATCC 10895 / CBS 109.51 / FGSC 9923 / NRRL Y-1056) (Yeast).